Reading from the N-terminus, the 106-residue chain is uncharacterized protein (106 aa).

Residues Met-1–Ile-93 enclose the HTH hxlR-type domain.

This is an uncharacterized protein from Methanocaldococcus jannaschii (strain ATCC 43067 / DSM 2661 / JAL-1 / JCM 10045 / NBRC 100440) (Methanococcus jannaschii).